A 180-amino-acid polypeptide reads, in one-letter code: Large ribosomal subunit protein uL10 (180 aa).

The protein belongs to the universal ribosomal protein uL10 family. In terms of assembly, part of the ribosomal stalk of the 50S ribosomal subunit. The N-terminus interacts with L11 and the large rRNA to form the base of the stalk. The C-terminus forms an elongated spine to which L12 dimers bind in a sequential fashion forming a multimeric L10(L12)X complex.

Functionally, forms part of the ribosomal stalk, playing a central role in the interaction of the ribosome with GTP-bound translation factors. This chain is Large ribosomal subunit protein uL10, found in Thermosipho melanesiensis (strain DSM 12029 / CIP 104789 / BI429).